A 640-amino-acid chain; its full sequence is Pro-neuregulin-1, membrane-bound isoform (640 aa).

The propeptide occupies 1–19 (MSERKEGRGKGKGKKKERG). Residues 1 to 53 (MSERKEGRGKGKGKKKERGSGKKPESAAGSQSPALPPRLKEMKSQESAAGSKL) are disordered. Topologically, residues 20–242 (SGKKPESAAG…EKAEELYQKR (223 aa)) are extracellular. The Ig-like C2-type domain maps to 37–128 (PRLKEMKSQE…GNDSASANIT (92 aa)). The cysteines at positions 57 and 112 are disulfide-linked. Residues asparagine 120, asparagine 126, and asparagine 164 are each glycosylated (N-linked (GlcNAc...) asparagine). The EGF-like domain occupies 178–222 (HLVKCAEKEKTFCVNGGECFMVKDLSNPSRYLCKCQPGFTGARCT). Intrachain disulfides connect cysteine 182–cysteine 196, cysteine 190–cysteine 210, and cysteine 212–cysteine 221. The helical transmembrane segment at 243 to 265 (VLTITGICIALLVVGIMCVVAYC) threads the bilayer. The Cytoplasmic portion of the chain corresponds to 266–640 (KTKKQRKKLH…VIANQDPIAV (375 aa)). Residues 334–350 (TSHYTSTAHHSTTVTQT) are compositionally biased toward low complexity. 4 disordered regions span residues 334-360 (TSHYTSTAHHSTTVTQTPSHSWSNGHT), 375-399 (SVENSRHSSPTGGPRGRLNGTGGPR), 433-461 (RMSPVDFHTPSSPKSPPSEMSPPVSSMTV), and 524-588 (EYET…DTPF). The segment covering 351 to 360 (PSHSWSNGHT) has biased composition (polar residues). Residues 387–397 (GPRGRLNGTGG) are compositionally biased toward gly residues. Residues 542–552 (ANSRRAKRTKP) show a composition bias toward basic residues. A compositionally biased stretch (low complexity) spans 563–574 (DSNTSSQSSNSE).

It belongs to the neuregulin family. The cytoplasmic domain interacts with the LIM domain region of LIMK1. Forms a ternary complex with ERBB3 and ITGAV:ITGB3 or ITGA6:ITGB4. Interacts with NRDC and BACE1. Post-translationally, proteolytic cleavage close to the plasma membrane on the external face leads to the release of the soluble growth factor form. In terms of processing, N- and O-glycosylated. Extensive glycosylation precedes the proteolytic cleavage. As to expression, type I isoforms are the predominant forms expressed in the endocardium. Isoform alpha is expressed in breast, ovary, testis, prostate, heart, skeletal muscle, lung, placenta liver, kidney, salivary gland, small intestine and brain, but not in uterus, stomach, pancreas, and spleen. Isoform 3 is the predominant form in mesenchymal cells and in non-neuronal organs, whereas isoform 6 is the major neuronal form. Isoform 8 is expressed in spinal cord and brain. Isoform 9 is the major form in skeletal muscle cells; in the nervous system it is expressed in spinal cord and brain. Also detected in adult heart, placenta, lung, liver, kidney, and pancreas. Isoform 10 is expressed in nervous system: spinal cord motor neurons, dorsal root ganglion neurons, and brain. Predominant isoform expressed in sensory and motor neurons. Not detected in adult heart, placenta, lung, liver, skeletal muscle, kidney, and pancreas. Not expressed in fetal lung, liver and kidney. Type IV isoforms are brain-specific.

Its subcellular location is the cell membrane. The protein resides in the secreted. The protein localises to the nucleus. It localises to the membrane. Functionally, direct ligand for ERBB3 and ERBB4 tyrosine kinase receptors. Concomitantly recruits ERBB1 and ERBB2 coreceptors, resulting in ligand-stimulated tyrosine phosphorylation and activation of the ERBB receptors. The multiple isoforms perform diverse functions such as inducing growth and differentiation of epithelial, glial, neuronal, and skeletal muscle cells; inducing expression of acetylcholine receptor in synaptic vesicles during the formation of the neuromuscular junction; stimulating lobuloalveolar budding and milk production in the mammary gland and inducing differentiation of mammary tumor cells; stimulating Schwann cell proliferation; implication in the development of the myocardium such as trabeculation of the developing heart. Isoform 10 may play a role in motor and sensory neuron development. Binds to ERBB4. Binds to ERBB3. Acts as a ligand for integrins and binds (via EGF domain) to integrins ITGAV:ITGB3 or ITGA6:ITGB4. Its binding to integrins and subsequent ternary complex formation with integrins and ERRB3 are essential for NRG1-ERBB signaling. Induces the phosphorylation and activation of MAPK3/ERK1, MAPK1/ERK2 and AKT1. Ligand-dependent ERBB4 endocytosis is essential for the NRG1-mediated activation of these kinases in neurons. This Homo sapiens (Human) protein is Pro-neuregulin-1, membrane-bound isoform (NRG1).